Here is a 125-residue protein sequence, read N- to C-terminus: Small ribosomal subunit protein uS12m (125 aa).

Residues 1-50 (MPSLNQLIRHGREEKRRTDRTRALDQCPQKQGVCPRVSTRTPKKPNSAPR) form a disordered region. Residues 10-23 (HGREEKRRTDRTRA) are compositionally biased toward basic and acidic residues.

This sequence belongs to the universal ribosomal protein uS12 family.

The protein localises to the mitochondrion. In terms of biological role, protein S12 is involved in the translation initiation step. The polypeptide is Small ribosomal subunit protein uS12m (RPS12) (Petunia hybrida (Petunia)).